The primary structure comprises 157 residues: 6,7-dimethyl-8-ribityllumazine synthase 1 (157 aa).

5-amino-6-(D-ribitylamino)uracil contacts are provided by residues Phe-22, 53–55 (ALE), and 82–84 (TVI). 87–88 (ET) provides a ligand contact to (2S)-2-hydroxy-3-oxobutyl phosphate. His-90 functions as the Proton donor in the catalytic mechanism. Asn-115 is a binding site for 5-amino-6-(D-ribitylamino)uracil. Arg-129 contributes to the (2S)-2-hydroxy-3-oxobutyl phosphate binding site.

It belongs to the DMRL synthase family.

The catalysed reaction is (2S)-2-hydroxy-3-oxobutyl phosphate + 5-amino-6-(D-ribitylamino)uracil = 6,7-dimethyl-8-(1-D-ribityl)lumazine + phosphate + 2 H2O + H(+). It functions in the pathway cofactor biosynthesis; riboflavin biosynthesis; riboflavin from 2-hydroxy-3-oxobutyl phosphate and 5-amino-6-(D-ribitylamino)uracil: step 1/2. Functionally, catalyzes the formation of 6,7-dimethyl-8-ribityllumazine by condensation of 5-amino-6-(D-ribitylamino)uracil with 3,4-dihydroxy-2-butanone 4-phosphate. This is the penultimate step in the biosynthesis of riboflavin. The polypeptide is 6,7-dimethyl-8-ribityllumazine synthase 1 (Brucella suis biovar 1 (strain 1330)).